Reading from the N-terminus, the 344-residue chain is Phosphoribosylformylglycinamidine cyclo-ligase (344 aa).

The protein belongs to the AIR synthase family.

The protein resides in the cytoplasm. The catalysed reaction is 2-formamido-N(1)-(5-O-phospho-beta-D-ribosyl)acetamidine + ATP = 5-amino-1-(5-phospho-beta-D-ribosyl)imidazole + ADP + phosphate + H(+). It functions in the pathway purine metabolism; IMP biosynthesis via de novo pathway; 5-amino-1-(5-phospho-D-ribosyl)imidazole from N(2)-formyl-N(1)-(5-phospho-D-ribosyl)glycinamide: step 2/2. In Synechococcus sp. (strain RCC307), this protein is Phosphoribosylformylglycinamidine cyclo-ligase.